A 475-amino-acid chain; its full sequence is Trifunctional enzyme subunit beta, mitochondrial (475 aa).

A mitochondrion-targeting transit peptide spans 1 to 34; the sequence is MISLLTYTLKNLPNTSKWALRFCMRPLSSSSQLQ. Lys-73 carries the post-translational modification N6-acetyllysine; alternate. At Lys-73 the chain carries N6-succinyllysine; alternate. Cys-139 serves as the catalytic Acyl-thioester intermediate. Residues 174–221 lie within the membrane without spanning it; it reads IRHSRKMRKMMLDLNKAKTLAQRLSIISKFRLNFLSPELPAVSEFSTS. Lys-189 bears the N6-acetyllysine; alternate mark. Lys-189 bears the N6-succinyllysine; alternate mark. N6-succinyllysine is present on residues Lys-191 and Lys-292. Lys-294 bears the N6-acetyllysine; alternate mark. Lys-294 carries the post-translational modification N6-succinyllysine; alternate. Position 299 is an N6-acetyllysine (Lys-299). Position 333 is an N6-acetyllysine; alternate (Lys-333). N6-succinyllysine; alternate is present on Lys-333. Lys-349 and Lys-362 each carry N6-acetyllysine. Cys-459 functions as the Proton donor/acceptor in the catalytic mechanism.

Belongs to the thiolase-like superfamily. Thiolase family. In terms of assembly, heterotetramer of 2 alpha/HADHA and 2 beta/HADHB subunits; forms the mitochondrial trifunctional enzyme. Also purified as higher order heterooligomers including a 4 alpha/HADHA and 4 beta/HADHB heterooligomer which physiological significance remains unclear. The mitochondrial trifunctional enzyme interacts with MTLN. Interacts with RSAD2/viperin.

It localises to the mitochondrion. The protein localises to the mitochondrion inner membrane. Its subcellular location is the mitochondrion outer membrane. It is found in the endoplasmic reticulum. The catalysed reaction is an acyl-CoA + acetyl-CoA = a 3-oxoacyl-CoA + CoA. The enzyme catalyses butanoyl-CoA + acetyl-CoA = 3-oxohexanoyl-CoA + CoA. It carries out the reaction hexanoyl-CoA + acetyl-CoA = 3-oxooctanoyl-CoA + CoA. It catalyses the reaction octanoyl-CoA + acetyl-CoA = 3-oxodecanoyl-CoA + CoA. The catalysed reaction is decanoyl-CoA + acetyl-CoA = 3-oxododecanoyl-CoA + CoA. The enzyme catalyses dodecanoyl-CoA + acetyl-CoA = 3-oxotetradecanoyl-CoA + CoA. It carries out the reaction tetradecanoyl-CoA + acetyl-CoA = 3-oxohexadecanoyl-CoA + CoA. Its pathway is lipid metabolism; fatty acid beta-oxidation. Mitochondrial trifunctional enzyme catalyzes the last three of the four reactions of the mitochondrial beta-oxidation pathway. The mitochondrial beta-oxidation pathway is the major energy-producing process in tissues and is performed through four consecutive reactions breaking down fatty acids into acetyl-CoA. Among the enzymes involved in this pathway, the trifunctional enzyme exhibits specificity for long-chain fatty acids. Mitochondrial trifunctional enzyme is a heterotetrameric complex composed of two proteins, the trifunctional enzyme subunit alpha/HADHA carries the 2,3-enoyl-CoA hydratase and the 3-hydroxyacyl-CoA dehydrogenase activities, while the trifunctional enzyme subunit beta/HADHB described here bears the 3-ketoacyl-CoA thiolase activity. The protein is Trifunctional enzyme subunit beta, mitochondrial (HADHB) of Bos taurus (Bovine).